A 249-amino-acid chain; its full sequence is Eukaryotic translation initiation factor 6 (249 aa).

It belongs to the eIF-6 family. Monomer. Associates with the 60S ribosomal subunit.

Its subcellular location is the cytoplasm. It localises to the nucleus. It is found in the nucleolus. Its function is as follows. Binds to the 60S ribosomal subunit and prevents its association with the 40S ribosomal subunit to form the 80S initiation complex in the cytoplasm. May also be involved in ribosome biogenesis. The protein is Eukaryotic translation initiation factor 6 of Babesia bovis.